Consider the following 387-residue polypeptide: 3-ketoacyl-CoA thiolase (387 aa).

The Acyl-thioester intermediate role is filled by Cys-91. Catalysis depends on proton acceptor residues His-343 and Cys-373.

This sequence belongs to the thiolase-like superfamily. Thiolase family. Heterotetramer of two alpha chains (FadB) and two beta chains (FadA).

The protein resides in the cytoplasm. The catalysed reaction is an acyl-CoA + acetyl-CoA = a 3-oxoacyl-CoA + CoA. It functions in the pathway lipid metabolism; fatty acid beta-oxidation. Catalyzes the final step of fatty acid oxidation in which acetyl-CoA is released and the CoA ester of a fatty acid two carbons shorter is formed. The sequence is that of 3-ketoacyl-CoA thiolase from Aeromonas salmonicida (strain A449).